The chain runs to 55 residues: ATP synthase protein 8 (55 aa).

A helical membrane pass occupies residues 11 to 31; the sequence is LIMFSVTLMLLIVLVINHFML.

Belongs to the ATPase protein 8 family. As to quaternary structure, F-type ATPases have 2 components, CF(1) - the catalytic core - and CF(0) - the membrane proton channel.

The protein localises to the mitochondrion membrane. Functionally, mitochondrial membrane ATP synthase (F(1)F(0) ATP synthase or Complex V) produces ATP from ADP in the presence of a proton gradient across the membrane which is generated by electron transport complexes of the respiratory chain. F-type ATPases consist of two structural domains, F(1) - containing the extramembraneous catalytic core and F(0) - containing the membrane proton channel, linked together by a central stalk and a peripheral stalk. During catalysis, ATP synthesis in the catalytic domain of F(1) is coupled via a rotary mechanism of the central stalk subunits to proton translocation. Part of the complex F(0) domain. Minor subunit located with subunit a in the membrane. This chain is ATP synthase protein 8 (MT-ATP8), found in Albinaria caerulea (Land snail).